The following is a 378-amino-acid chain: Lactosylceramide 1,3-N-acetyl-beta-D-glucosaminyltransferase (378 aa).

Topologically, residues M1–Q14 are cytoplasmic. A helical; Signal-anchor for type II membrane protein membrane pass occupies residues L15–I35. The Lumenal portion of the chain corresponds to D36–I378. An N-linked (GlcNAc...) asparagine glycan is attached at N59.

This sequence belongs to the glycosyltransferase 31 family. Widely expressed. Highly expressed in lung, colon, placenta, testis, pituitary gland and cerebellum. Weakly expressed in brain, liver, spleen, lymph node and thymus.

The protein localises to the golgi apparatus membrane. It catalyses the reaction a beta-D-Gal-(1-&gt;4)-beta-D-Glc-(1&lt;-&gt;1)-Cer(d18:1(4E)) + UDP-N-acetyl-alpha-D-glucosamine = a beta-D-GlcNAc-(1-&gt;3)-beta-D-Gal-(1-&gt;4)-beta-D-Glc-(1&lt;-&gt;1)-Cer(d18:1(4E)) + UDP + H(+). It carries out the reaction a neolactoside nLc4Cer(d18:1(4E)) + UDP-N-acetyl-alpha-D-glucosamine = a neolactoside IV(3)-beta-GlcNAc-nLc4Cer(d18:1(4E)) + UDP + H(+). Its pathway is protein modification; protein glycosylation. In terms of biological role, beta-1,3-N-acetylglucosaminyltransferase that plays a key role in the synthesis of lacto- or neolacto-series carbohydrate chains on glycolipids, notably by participating in biosynthesis of HNK-1 and Lewis X carbohydrate structures. Has strong activity toward lactosylceramide (LacCer) and neolactotetraosylceramide (nLc(4)Cer; paragloboside), resulting in the synthesis of Lc(3)Cer and neolactopentaosylceramide (nLc(5)Cer), respectively. Probably plays a central role in regulating neolacto-series glycolipid synthesis during embryonic development. The polypeptide is Lactosylceramide 1,3-N-acetyl-beta-D-glucosaminyltransferase (Homo sapiens (Human)).